The primary structure comprises 237 residues: Ribosomal RNA small subunit methyltransferase G (237 aa).

S-adenosyl-L-methionine-binding positions include G78, F83, 129–130 (AE), and R148.

It belongs to the methyltransferase superfamily. RNA methyltransferase RsmG family.

It localises to the cytoplasm. Its function is as follows. Specifically methylates the N7 position of a guanine in 16S rRNA. This is Ribosomal RNA small subunit methyltransferase G from Streptococcus pyogenes serotype M6 (strain ATCC BAA-946 / MGAS10394).